The chain runs to 195 residues: Small ribosomal subunit protein uS4c (195 aa).

An S4 RNA-binding domain is found at 82 to 143; it reads MRLDNILFRL…KQRSKALIQN (62 aa).

Belongs to the universal ribosomal protein uS4 family. In terms of assembly, part of the 30S ribosomal subunit. Contacts protein S5. The interaction surface between S4 and S5 is involved in control of translational fidelity.

The protein localises to the plastid. It localises to the chloroplast. One of the primary rRNA binding proteins, it binds directly to 16S rRNA where it nucleates assembly of the body of the 30S subunit. Its function is as follows. With S5 and S12 plays an important role in translational accuracy. This chain is Small ribosomal subunit protein uS4c (rps4), found in Watsonia angusta.